We begin with the raw amino-acid sequence, 211 residues long: Protein-L-isoaspartate O-methyltransferase (211 aa).

S62 is a catalytic residue.

It belongs to the methyltransferase superfamily. L-isoaspartyl/D-aspartyl protein methyltransferase family.

The protein localises to the cytoplasm. The enzyme catalyses [protein]-L-isoaspartate + S-adenosyl-L-methionine = [protein]-L-isoaspartate alpha-methyl ester + S-adenosyl-L-homocysteine. Functionally, catalyzes the methyl esterification of L-isoaspartyl residues in peptides and proteins that result from spontaneous decomposition of normal L-aspartyl and L-asparaginyl residues. It plays a role in the repair and/or degradation of damaged proteins. This is Protein-L-isoaspartate O-methyltransferase from Shewanella oneidensis (strain ATCC 700550 / JCM 31522 / CIP 106686 / LMG 19005 / NCIMB 14063 / MR-1).